A 347-amino-acid polypeptide reads, in one-letter code: tRNA N6-adenosine threonylcarbamoyltransferase (347 aa).

Residues His115 and His119 each contribute to the Fe cation site. Substrate-binding positions include 138–142, Asp171, Gly184, and Asn277; that span reads LVSGG. Asp305 contacts Fe cation.

The protein belongs to the KAE1 / TsaD family. Fe(2+) is required as a cofactor.

The protein localises to the cytoplasm. The enzyme catalyses L-threonylcarbamoyladenylate + adenosine(37) in tRNA = N(6)-L-threonylcarbamoyladenosine(37) in tRNA + AMP + H(+). In terms of biological role, required for the formation of a threonylcarbamoyl group on adenosine at position 37 (t(6)A37) in tRNAs that read codons beginning with adenine. Is involved in the transfer of the threonylcarbamoyl moiety of threonylcarbamoyl-AMP (TC-AMP) to the N6 group of A37, together with TsaE and TsaB. TsaD likely plays a direct catalytic role in this reaction. This Polaromonas sp. (strain JS666 / ATCC BAA-500) protein is tRNA N6-adenosine threonylcarbamoyltransferase.